A 108-amino-acid polypeptide reads, in one-letter code: MEQRFTHEDRFIMGLFPLLAVILISSNSSIIDIAMTVIIFGWIIYETLITVHFCKNYIETVESIMLGFVGFLGVLCLDKFPFGIILLIIYVIEGIYINVKTLKYARSC.

Transmembrane regions (helical) follow at residues phenylalanine 11–isoleucine 31, isoleucine 33–phenylalanine 53, and valine 69–isoleucine 89.

The protein resides in the host membrane. This Acidianus hospitalis (AFV-1) protein is Putative transmembrane protein ORF108.